Reading from the N-terminus, the 540-residue chain is Keratin, type II cytoskeletal 73 (540 aa).

The head stretch occupies residues 1 to 131; sequence MSRQFTYKSG…DPEIQKVCAQ (131 aa). Positions 132-167 are coil 1A; the sequence is EREQIKALNNKFASFIDKVRFLEQQNQVLGTKWELL. Residues 132 to 445 form the IF rod domain; it reads EREQIKALNN…KLLEGEECRM (314 aa). Positions 168–186 are linker 1; it reads QQQDLDNCKNNLEPILEGY. A coil 1B region spans residues 187-278; that stretch reads ISNLRKQLEM…CLYEGEIAQM (92 aa). Residues 279–302 are linker 12; the sequence is QSHISDTSVILSMDNNRNLDLNSI. The tract at residues 303–441 is coil 2; it reads IAEVRAQYED…ATYRKLLEGE (139 aa). The tract at residues 442-540 is tail; sequence ECRMSGEYTN…LSSPTKKTPR (99 aa). The interval 509–540 is disordered; sequence GEAKTRLGSTSEIKDLLGKTPALSSPTKKTPR. Residues 530–540 are compositionally biased toward polar residues; the sequence is ALSSPTKKTPR.

The protein belongs to the intermediate filament family. Heterotetramer of two type I and two type II keratins.

Has a role in hair formation. Specific component of keratin intermediate filaments in the inner root sheath (IRS) of the hair follicle. The polypeptide is Keratin, type II cytoskeletal 73 (KRT73) (Bos taurus (Bovine)).